The following is a 631-amino-acid chain: 1-deoxy-D-xylulose-5-phosphate synthase (631 aa).

Thiamine diphosphate contacts are provided by residues histidine 87 and 128–130 (GHS). Position 159 (aspartate 159) interacts with Mg(2+). Residues 160–161 (GA), asparagine 188, phenylalanine 295, and glutamate 377 contribute to the thiamine diphosphate site. Asparagine 188 is a binding site for Mg(2+).

Belongs to the transketolase family. DXPS subfamily. As to quaternary structure, homodimer. Mg(2+) serves as cofactor. The cofactor is thiamine diphosphate.

It catalyses the reaction D-glyceraldehyde 3-phosphate + pyruvate + H(+) = 1-deoxy-D-xylulose 5-phosphate + CO2. Its pathway is metabolic intermediate biosynthesis; 1-deoxy-D-xylulose 5-phosphate biosynthesis; 1-deoxy-D-xylulose 5-phosphate from D-glyceraldehyde 3-phosphate and pyruvate: step 1/1. Functionally, catalyzes the acyloin condensation reaction between C atoms 2 and 3 of pyruvate and glyceraldehyde 3-phosphate to yield 1-deoxy-D-xylulose-5-phosphate (DXP). This is 1-deoxy-D-xylulose-5-phosphate synthase from Pseudomonas entomophila (strain L48).